Here is a 185-residue protein sequence, read N- to C-terminus: Large ribosomal subunit protein uL22 (185 aa).

It belongs to the universal ribosomal protein uL22 family. As to quaternary structure, part of the 50S ribosomal subunit.

This protein binds specifically to 23S rRNA. It makes multiple contacts with different domains of the 23S rRNA in the assembled 50S subunit and ribosome. Functionally, the globular domain of the protein is located near the polypeptide exit tunnel on the outside of the subunit, while an extended beta-hairpin is found that lines the wall of the exit tunnel in the center of the 70S ribosome. The sequence is that of Large ribosomal subunit protein uL22 from Pyrobaculum aerophilum (strain ATCC 51768 / DSM 7523 / JCM 9630 / CIP 104966 / NBRC 100827 / IM2).